The following is a 1247-amino-acid chain: F-box/WD repeat-containing protein A (1247 aa).

The START domain occupies 1–214 (MQYVNGNDIS…PATVSGRLAK (214 aa)). Disordered stretches follow at residues 484–514 (GNKD…DNII) and 552–576 (QQPQ…KEIK). A compositionally biased stretch (low complexity) spans 552 to 566 (QQPQQQQQQPQEQQQ). Residues 631 to 677 (NSGFDNLPEEVVQIIFSNLSAINIVNLSLVCKRFKMATDSPILWKNL) form the F-box domain. Disordered stretches follow at residues 697–744 (SNLS…QQQQ) and 833–856 (GQES…KRDN). Composition is skewed to low complexity over residues 707–719 (NSNS…GSSS) and 726–744 (QQQN…QQQQ). Over residues 833–846 (GQESPINKNSSDNP) the composition is skewed to polar residues. 7 WD repeats span residues 895-934 (GHNR…GDYE), 945-984 (DHTQ…IEVI), 988-1025 (RPTN…LLWN), 1029-1073 (AHTK…CINT), 1076-1114 (GHSY…TFIS), 1119-1158 (KHTG…LSNI), and 1218-1247 (NHES…RWDF).

As to quaternary structure, component of an SCF complex including at least culA. Formation of this complex appears to require activity of the MAP kinase erk2. Interacts with regA.

Functionally, substrate recognition component of a SCF (SKP1-CUL1-F-box protein) E3 ubiquitin-protein ligase complex which mediates the ubiquitination and subsequent proteasomal degradation of target proteins. May target the cAMP phosphodiesterase regA for degradation leading to an increase in cAMP and PKA activity. Promotes development of prestalk cells as opposed to prespores within the developing fruiting body. Required for culmination and fruiting body development. This Dictyostelium discoideum (Social amoeba) protein is F-box/WD repeat-containing protein A (fbxA).